Consider the following 582-residue polypeptide: Sulfite reductase [NADPH] hemoprotein beta-component (582 aa).

Residues 1 to 12 (MDLKVKVDRSRD) are compositionally biased toward basic and acidic residues. Positions 1 to 26 (MDLKVKVDRSRDVSQPLDKLGPDETL) are disordered. [4Fe-4S] cluster-binding residues include Cys447, Cys453, Cys492, and Cys496. Cys496 lines the siroheme pocket.

Belongs to the nitrite and sulfite reductase 4Fe-4S domain family. In terms of assembly, alpha(8)-beta(8). The alpha component is a flavoprotein, the beta component is a hemoprotein. Siroheme is required as a cofactor. It depends on [4Fe-4S] cluster as a cofactor.

It carries out the reaction hydrogen sulfide + 3 NADP(+) + 3 H2O = sulfite + 3 NADPH + 4 H(+). Its pathway is sulfur metabolism; hydrogen sulfide biosynthesis; hydrogen sulfide from sulfite (NADPH route): step 1/1. Functionally, component of the sulfite reductase complex that catalyzes the 6-electron reduction of sulfite to sulfide. This is one of several activities required for the biosynthesis of L-cysteine from sulfate. This Afipia carboxidovorans (strain ATCC 49405 / DSM 1227 / KCTC 32145 / OM5) (Oligotropha carboxidovorans) protein is Sulfite reductase [NADPH] hemoprotein beta-component.